The following is a 78-amino-acid chain: Neurogranin (78 aa).

The residue at position 1 (M1) is an N-acetylmethionine. An intrachain disulfide couples C3 to C51. One can recognise an IQ domain in the interval 26–47; it reads ANAAAAKIQASFRGHMARKKIK. S36 carries the phosphoserine; by PHK and PKC modification. Residues 39 to 78 form a disordered region; sequence GHMARKKIKSGECGRKGPGPGGPGGAGGARGGAGGGPSGD. Residues 48-78 form the Collagen-like domain; it reads SGECGRKGPGPGGPGGAGGARGGAGGGPSGD. Gly residues predominate over residues 54 to 78; that stretch reads KGPGPGGPGGAGGARGGAGGGPSGD. Residue R68 is modified to Citrulline; partial. Position 68 is an omega-N-methylarginine (R68).

Belongs to the neurogranin family. Interacts with apo-calmodulin; this interaction decreases the affinity of calmodulin for calcium ions. Post-translationally, disulfide bond formation is redox-sensitive. The cysteine residues are readily oxidized by several nitric acid (NO) donors and other oxidants to form intramolecular disulfide. Cys-51 can form a disulfide with any other of the cysteine residues with an order of reactivity Cys-9 &gt; Cys-4 &gt; Cys-3. In terms of processing, phosphorylated at Ser-36 by PHK and PKC, phosphorylation prevents interaction with Calmodulin and interrupts several learning- and memory-associated functions.

It is found in the cytoplasm. The protein localises to the synapse. It localises to the cell projection. Its subcellular location is the dendritic spine. Its function is as follows. Regulates the affinity of calmodulin for calcium. Involved in synaptic plasticity and spatial learning. The polypeptide is Neurogranin (Nrgn) (Mus musculus (Mouse)).